Reading from the N-terminus, the 2748-residue chain is Nuclear migration protein NUM1 (2748 aa).

Over residues 1-10 the composition is skewed to basic residues; it reads MSHNNRHKKN. 2 disordered regions span residues 1–36 and 290–312; these read MSHNNRHKKNNDKDSSAGQYANSIDNSLSQESVSTN and YYQKQHTSDTTVTSDPDSEGTTS. Polar residues predominate over residues 17–36; it reads AGQYANSIDNSLSQESVSTN. Residues 293 to 304 show a composition bias toward low complexity; it reads KQHTSDTTVTSD. A run of 12 repeats spans residues 593 to 656, 657 to 727, 728 to 798, 799 to 862, 863 to 926, 927 to 990, 991 to 1054, 1055 to 1118, 1119 to 1182, 1183 to 1246, 1247 to 1310, and 1311 to 1374. The tract at residues 593–1384 is 13 X tandem repeats; that stretch reads PSLEYLVEHA…PSLEYLVKHA (792 aa). Residues Ser611, Ser675, and Ser746 each carry the phosphoserine modification. Phosphoserine is present on residues Ser881, Ser945, and Ser1009. Residues Ser1201, Ser1265, and Ser1329 each carry the phosphoserine modification. Residues 1375–1384 form a 13; truncated repeat; that stretch reads PSLEYLVKHA. Positions 2111 to 2133 are disordered; sequence ERAERIDEQSINTTSSNSTTTSS. Low complexity predominate over residues 2122-2133; the sequence is NTTSSNSTTTSS. Ser2162, Ser2164, Ser2197, Ser2217, Ser2220, Ser2221, Ser2360, and Ser2424 each carry phosphoserine. Basic and acidic residues predominate over residues 2444–2460; sequence KEDKKGQATASKHEYVS. A disordered region spans residues 2444-2536; it reads KEDKKGQATA…HSSRNTPASR (93 aa). Residues 2465–2474 show a composition bias toward polar residues; it reads NKTSTVSTKS. Positions 2492–2503 are enriched in basic and acidic residues; the sequence is SESHPQIEEQSH. Ser2494 is subject to Phosphoserine. A compositionally biased stretch (basic residues) spans 2504–2514; that stretch reads RTNHHKHHKRQ. A compositionally biased stretch (low complexity) spans 2516 to 2532; the sequence is SLNSNSTSKTTHSSRNT. Position 2545 is a phosphoserine (Ser2545). Residues 2573-2683 enclose the PH domain; it reads QTVIGEYLFK…WYNSLRYLLQ (111 aa). The interval 2707 to 2748 is disordered; that stretch reads IFPLPGENTKSSSKRLSASRRSVSTRSLRHRVPQSRSFGNLR. A compositionally biased stretch (low complexity) spans 2720-2730; the sequence is KRLSASRRSVS.

As to quaternary structure, interacts with PAC11 when DYN1 is present, and TUB3.

The protein resides in the bud tip. Functionally, controls nuclear migration. NUM1 specifically controls the interaction of the bud neck cytoskeleton with the pre-divisional G2 nucleus. Functions in dynein-anchoring. During late anaphase forms dynein-interacting cortical microtubule capture sites at both cellular poles. This leads to dynein-dependent sliding of the microtubules in the bud. The protein is Nuclear migration protein NUM1 (NUM1) of Saccharomyces cerevisiae (strain ATCC 204508 / S288c) (Baker's yeast).